The sequence spans 651 residues: p-hydroxybenzoic acid efflux pump subunit AaeB (651 aa).

The next 11 helical transmembrane spans lie at 11–31 (FAFK…HLQL), 41–61 (AAIV…SGAI), 67–87 (LRII…VLTI), 91–111 (VLTL…SSLV), 119–139 (FGLA…TPLL), 150–170 (EIVL…PRSI), 368–388 (LFWL…IAVV), 405–425 (FLLG…FIIP), 429–449 (QSML…GIEV), 460–480 (LAST…VSLF), and 481–501 (LDSA…LLLI).

It belongs to the aromatic acid exporter ArAE (TC 2.A.85) family.

It is found in the cell inner membrane. Functionally, forms an efflux pump with AaeA. Could function as a metabolic relief valve, allowing to eliminate certain compounds when they accumulate to high levels in the cell. The polypeptide is p-hydroxybenzoic acid efflux pump subunit AaeB (Yersinia enterocolitica serotype O:8 / biotype 1B (strain NCTC 13174 / 8081)).